A 264-amino-acid polypeptide reads, in one-letter code: Eukaryotic translation initiation factor 6 (264 aa).

It belongs to the eIF-6 family. Monomer. Associates with the 60S ribosomal subunit.

It localises to the cytoplasm. The protein localises to the nucleus. The protein resides in the nucleolus. Its function is as follows. Binds to the 60S ribosomal subunit and prevents its association with the 40S ribosomal subunit to form the 80S initiation complex in the cytoplasm. May also be involved in ribosome biogenesis. In Toxoplasma gondii (strain ATCC 50861 / VEG), this protein is Eukaryotic translation initiation factor 6.